Reading from the N-terminus, the 272-residue chain is Low-density lipoprotein receptor class A domain-containing protein 2 (272 aa).

An N-terminal signal peptide occupies residues 1–25 (MEACCLLQLPQRLLLLGAAALTATA). Topologically, residues 26-233 (LETADLAELC…GSTDAHTSRS (208 aa)) are extracellular. Residue N97 is glycosylated (N-linked (GlcNAc...) asparagine). Residues 172–214 (PCGAYFRCQNGRCIPSSLVCDPWGMDNCGDGSDQGSWSPADCR) enclose the LDL-receptor class A domain. 3 cysteine pairs are disulfide-bonded: C173/C184, C179/C199, and C191/C213. Positions 202–272 (GSDQGSWSPA…QDAALEGSTE (71 aa)) are disordered. A compositionally biased stretch (polar residues) spans 220–236 (PSQTGSTDAHTSRSLTP). Residues 234–250 (LTPSPALGSAGSLWIAA) form a helical membrane-spanning segment. Topologically, residues 251–272 (ERSSPAGRDPTRQDAALEGSTE) are cytoplasmic.

It belongs to the LDLR family.

It localises to the membrane. In Homo sapiens (Human), this protein is Low-density lipoprotein receptor class A domain-containing protein 2 (LDLRAD2).